A 58-amino-acid chain; its full sequence is Ribosome modulation factor (58 aa).

The segment covering 1–14 (MKRQKRDKLTRAHS) has biased composition (basic residues). A disordered region spans residues 1 to 25 (MKRQKRDKLTRAHSKGYQAGISGRS).

The protein belongs to the ribosome modulation factor family.

It is found in the cytoplasm. In terms of biological role, during stationary phase, converts 70S ribosomes to an inactive dimeric form (100S ribosomes). The sequence is that of Ribosome modulation factor from Alteromonas naphthalenivorans.